The primary structure comprises 453 residues: Glutamyl-tRNA reductase (453 aa).

Substrate is bound by residues 54-57 (TCNR), Ser113, 118-120 (EAQ), and Gln124. Cys55 acts as the Nucleophile in catalysis. An NADP(+)-binding site is contributed by 193 to 198 (GGGEVS).

It belongs to the glutamyl-tRNA reductase family. Homodimer.

The catalysed reaction is (S)-4-amino-5-oxopentanoate + tRNA(Glu) + NADP(+) = L-glutamyl-tRNA(Glu) + NADPH + H(+). The protein operates within porphyrin-containing compound metabolism; protoporphyrin-IX biosynthesis; 5-aminolevulinate from L-glutamyl-tRNA(Glu): step 1/2. It functions in the pathway porphyrin-containing compound metabolism; chlorophyll biosynthesis. Its function is as follows. Catalyzes the NADPH-dependent reduction of glutamyl-tRNA(Glu) to glutamate 1-semialdehyde (GSA). This is Glutamyl-tRNA reductase from Chloroflexus aggregans (strain MD-66 / DSM 9485).